A 431-amino-acid polypeptide reads, in one-letter code: Ribonuclease TTHA0252 (431 aa).

The Zn(2+) site is built by His-59, His-61, Asp-63, His-64, His-141, Asp-162, and His-400.

It belongs to the metallo-beta-lactamase superfamily. RNA-metabolizing metallo-beta-lactamase-like family. Monomer. Zn(2+) serves as cofactor.

The protein localises to the cytoplasm. With respect to regulation, inhibited by cadmium, cobalt, manganese, magnesium, calcium and nickel ions. Has endoribonuclease activity towards 23S and 16S rRNA (in vitro). This is Ribonuclease TTHA0252 from Thermus thermophilus (strain ATCC 27634 / DSM 579 / HB8).